The primary structure comprises 309 residues: Voltage-dependent anion channel-forming protein mll4386 (309 aa).

3 consecutive transmembrane segments (helical) span residues 32 to 52 (ILPQ…LARW), 58 to 78 (GVFN…YLSF), and 227 to 247 (IVCL…TPLF).

This sequence belongs to the anion channel-forming bestrophin (TC 1.A.46) family.

The protein resides in the cell membrane. The protein is Voltage-dependent anion channel-forming protein mll4386 of Mesorhizobium japonicum (strain LMG 29417 / CECT 9101 / MAFF 303099) (Mesorhizobium loti (strain MAFF 303099)).